Consider the following 599-residue polypeptide: Translation initiation factor IF-2 (599 aa).

Residues proline 111–glutamate 278 form the tr-type G domain. The segment at glycine 120–threonine 127 is G1. GTP is bound at residue glycine 120–threonine 127. The interval glycine 145–histidine 149 is G2. The tract at residues aspartate 166–glycine 169 is G3. GTP is bound by residues aspartate 166–histidine 170 and asparagine 220–aspartate 223. Residues asparagine 220–aspartate 223 are G4. Residues serine 256 to leucine 258 are G5.

Belongs to the TRAFAC class translation factor GTPase superfamily. Classic translation factor GTPase family. IF-2 subfamily.

It is found in the cytoplasm. Its function is as follows. One of the essential components for the initiation of protein synthesis. Protects formylmethionyl-tRNA from spontaneous hydrolysis and promotes its binding to the 30S ribosomal subunits. Also involved in the hydrolysis of GTP during the formation of the 70S ribosomal complex. This is Translation initiation factor IF-2 from Mesomycoplasma hyopneumoniae (strain 7448) (Mycoplasma hyopneumoniae).